The primary structure comprises 1971 residues: Germinal-center associated nuclear protein (1971 aa).

Disordered regions lie at residues 1-50 and 214-406; these read MHPV…KSLA and PAFA…RGKS. The segment covering 8–29 has biased composition (polar residues); it reads GGQQPSAFAVSSSTTGTYQTKS. Position 32 is an asymmetric dimethylarginine (R32). Positions 33–335 are FG-repeats; the sequence is FGQPSLFGQN…RPRGGTLFGR (303 aa). Polar residues-rich tracts occupy residues 38–50 and 214–224; these read LFGQNSTPSKSLA and PAFASPLSNQN. A compositionally biased stretch (low complexity) spans 232–253; it reads STSAFGSSNSSFSTFPTASPGS. Composition is skewed to basic and acidic residues over residues 288–321 and 342–359; these read RKEDQDRSPRRHCHEAAEDPDPLSRGDHPPDKRP and KSNKEAGRLGSKESKESG. Positions 414–550 are DNA primase; sequence EEWIYSLGGV…AAGSLLSKSS (137 aa). S424 bears the Phosphoserine mark. An N6-acetyllysine mark is found at K483 and K484. Residues S502, S531, and S550 each carry the phosphoserine modification. The 184-residue stretch at 768–951 folds into the PCI domain; the sequence is NNENMTKCLQ…RKSVFIGRKL (184 aa). Residues 1124–1162 adopt a coiled-coil conformation; that stretch reads HVAAEEVSMERQRLEEEKQRAEEERLKQERELMLTQLSE. Residues 1793 to 1840 are disordered; sequence RELQLSHGRSGMRSIHPPTSTFPTPLLHVHQKGKKKEESGREGSLSTE.

The protein belongs to the SAC3 family. As to quaternary structure, component of the nuclear pore complex (NPC)-associated TREX-2 complex (transcription and export complex 2), composed of at least GANP, 2 copies of ENY2, PCID2, SEM1/DSS1, and either centrin CETN2 or centrin CETN3. The TREX-2 complex also associates with ALYREF/ALY. Interacts with RNA polymerase II subunit POLR2A and with the transcription elongation factor SUPT5H/SPT5. Interacts (via FG-repeats) with NXF1; this interaction is not mediated by RNA. Interacts with nuclear envelope proteins NUP62, NUP153 and RANBP2/NUP358; interaction with NUP153 is required for full localization at the nuclear pore complex. Interacts with several RNA helicases, including DHX9, DDX21, and DDX39A/DDX39, and with DNA topoisomerase TOP2A. Directly interacts with AICDA/AID. Interacts with the glucocorticoid receptor NR3C1. Interacts with MCM3. In terms of processing, phosphorylation at Ser-502 is induced in B-cells by CD40-stimulation, but not by bacterial lipopolysaccharide (LPS). Expressed at low levels in lymphoid organs, including thymus, spleen and lymph nodes. Up-regulated in stimulated B-cells in spleen and Peyer's patch germinal centers (at protein level).

The protein resides in the cytoplasm. It is found in the nucleus. Its subcellular location is the nucleus envelope. The protein localises to the nuclear pore complex. It localises to the nucleoplasm. The protein resides in the chromosome. The enzyme catalyses L-lysyl-[histone] + acetyl-CoA = N(6)-acetyl-L-lysyl-[histone] + CoA + H(+). Its function is as follows. As a component of the TREX-2 complex, involved in the export of mRNAs to the cytoplasm through the nuclear pores. Through the acetylation of histones, affects the assembly of nucleosomes at immunoglobulin variable region genes and promotes the recruitment and positioning of transcription complex to favor DNA cytosine deaminase AICDA/AID targeting, hence promoting somatic hypermutations. This is Germinal-center associated nuclear protein (Mcm3ap) from Mus musculus (Mouse).